The chain runs to 876 residues: Alanine--tRNA ligase (876 aa).

An N6-acetyllysine modification is found at Lys74. Residues His564, His568, Cys666, and His670 each coordinate Zn(2+).

The protein belongs to the class-II aminoacyl-tRNA synthetase family. As to quaternary structure, homotetramer. Zn(2+) is required as a cofactor.

It is found in the cytoplasm. The enzyme catalyses tRNA(Ala) + L-alanine + ATP = L-alanyl-tRNA(Ala) + AMP + diphosphate. Functionally, catalyzes the attachment of alanine to tRNA(Ala) in a two-step reaction: alanine is first activated by ATP to form Ala-AMP and then transferred to the acceptor end of tRNA(Ala). Also edits incorrectly charged Ser-tRNA(Ala) and Gly-tRNA(Ala) via its editing domain. In Shigella boydii serotype 4 (strain Sb227), this protein is Alanine--tRNA ligase.